A 178-amino-acid chain; its full sequence is Plasmid transfer protein TraF (178 aa).

Positions 1–30 (MSRILKRIAAGVVIAGVAALLLAAGGYAAG) are cleaved as a signal peptide.

This sequence belongs to the peptidase S26C family.

It localises to the periplasm. Functionally, required for donor-specific phage sensitivity. May be involved in pilus assembly. The protein is Plasmid transfer protein TraF (traF) of Escherichia coli.